A 98-amino-acid chain; its full sequence is Citrate lyase acyl carrier protein (98 aa).

O-(phosphoribosyl dephospho-coenzyme A)serine is present on Ser-14.

The protein belongs to the CitD family. Oligomer with a subunit composition of (alpha,beta,gamma)6.

The protein resides in the cytoplasm. Functionally, covalent carrier of the coenzyme of citrate lyase. The protein is Citrate lyase acyl carrier protein of Shigella boydii serotype 4 (strain Sb227).